A 211-amino-acid polypeptide reads, in one-letter code: Thymidylate kinase (211 aa).

Residue 11 to 18 (GPDGAGKT) participates in ATP binding.

The protein belongs to the thymidylate kinase family.

The enzyme catalyses dTMP + ATP = dTDP + ADP. Phosphorylation of dTMP to form dTDP in both de novo and salvage pathways of dTTP synthesis. The protein is Thymidylate kinase of Streptococcus equi subsp. zooepidemicus (strain H70).